A 395-amino-acid chain; its full sequence is MAKHLFTSESVTEGHPDKVADQISDAILDSILSKDPLARVACETLVTTGLVLISGEITCKCYVDIPNIVRETVRDIGYTRAKYGFDCDTCAVLTSIDEQSPDIAMGVDEALEAREGLDDLFSRVGAGDQGIMVGYATDETPTLMPMPIYLAHRLARRLASVRKNGTLPYLRPDGKTQVTVQYDNGRPVKVDTVVISAQHHPAVDLGTIRADLIEKVVEPIIPVGLITNSTRYLINPTGRFVIGGPQADTGLTGRKIVVDTYGGMARHGGGAFSGKDPTKVDRSASYAARYVAKNIVAAGLASRCEVHVAYAIGVAKPVALRVDTFGTGLINEERLEKLVLEHFDLRPAAIIHHLDLRRPIYRQVAAYGHFGRGDLNLPWERIDKAEELRAAGTGG.

Residue H15 coordinates ATP. D17 serves as a coordination point for Mg(2+). A K(+)-binding site is contributed by E43. L-methionine contacts are provided by E56 and Q99. Positions 99–109 (QSPDIAMGVDE) are flexible loop. ATP-binding positions include 173-175 (DGK), 239-240 (RF), D248, 254-255 (RK), A271, and K275. Residue D248 participates in L-methionine binding. K279 contributes to the L-methionine binding site.

This sequence belongs to the AdoMet synthase family. As to quaternary structure, homotetramer; dimer of dimers. Mg(2+) is required as a cofactor. K(+) serves as cofactor.

It localises to the cytoplasm. It carries out the reaction L-methionine + ATP + H2O = S-adenosyl-L-methionine + phosphate + diphosphate. It functions in the pathway amino-acid biosynthesis; S-adenosyl-L-methionine biosynthesis; S-adenosyl-L-methionine from L-methionine: step 1/1. Functionally, catalyzes the formation of S-adenosylmethionine (AdoMet) from methionine and ATP. The overall synthetic reaction is composed of two sequential steps, AdoMet formation and the subsequent tripolyphosphate hydrolysis which occurs prior to release of AdoMet from the enzyme. In Desulforudis audaxviator (strain MP104C), this protein is S-adenosylmethionine synthase.